The sequence spans 186 residues: Ferritin heavy chain (186 aa).

One can recognise a Ferritin-like diiron domain in the interval 16-165 (QNYHQDSEAA…DHVTNLRKMG (150 aa)). Fe cation-binding residues include glutamate 33, glutamate 68, histidine 71, glutamate 113, and glutamine 147. Serine 184 carries the phosphoserine modification.

This sequence belongs to the ferritin family. Oligomer of 24 subunits. There are two types of subunits: L (light) chain and H (heavy) chain. The major chain can be light or heavy, depending on the species and tissue type. The functional molecule forms a roughly spherical shell with a diameter of 12 nm and contains a central cavity into which the insoluble mineral iron core is deposited. Interacts with NCOA4; NCOA4 promotes targeting of the iron-binding ferritin complex to autolysosomes following starvation or iron depletion.

The protein localises to the cytoplasm. It localises to the lysosome. Its subcellular location is the cytoplasmic vesicle. The protein resides in the autophagosome. The enzyme catalyses 4 Fe(2+) + O2 + 4 H(+) = 4 Fe(3+) + 2 H2O. Its function is as follows. Stores iron in a soluble, non-toxic, readily available form. Important for iron homeostasis. Has ferroxidase activity. Iron is taken up in the ferrous form and deposited as ferric hydroxides after oxidation. Also plays a role in delivery of iron to cells. Mediates iron uptake in capsule cells of the developing kidney. Delivery to lysosomes is mediated by the cargo receptor NCOA4 for autophagic degradation and release of iron. This Cricetulus griseus (Chinese hamster) protein is Ferritin heavy chain (FTH1).